The chain runs to 717 residues: Ubiquitin carboxyl-terminal hydrolase 11 (717 aa).

Positions A231–K268 are disordered. The span at S242 to S257 shows a compositional bias: low complexity. Positions K258–K268 are enriched in basic and acidic residues. Residues T298–M707 form the USP domain. C307 (nucleophile) is an active-site residue. Residues K531–N577 are disordered. Residues S549–H564 show a composition bias toward basic residues. H649 acts as the Proton acceptor in catalysis.

It belongs to the peptidase C19 family.

It carries out the reaction Thiol-dependent hydrolysis of ester, thioester, amide, peptide and isopeptide bonds formed by the C-terminal Gly of ubiquitin (a 76-residue protein attached to proteins as an intracellular targeting signal).. The protein is Ubiquitin carboxyl-terminal hydrolase 11 (UBP11) of Saccharomyces cerevisiae (strain ATCC 204508 / S288c) (Baker's yeast).